A 367-amino-acid chain; its full sequence is Glutamate 5-kinase (367 aa).

Lysine 17 is a binding site for ATP. Serine 57, aspartate 144, and asparagine 156 together coordinate substrate. ATP contacts are provided by residues 176–177 and 217–223; these read SD and TGGMTSK. A PUA domain is found at 279–357; sequence AGALTLDEGA…SELPGELRRP (79 aa).

The protein belongs to the glutamate 5-kinase family.

It localises to the cytoplasm. The catalysed reaction is L-glutamate + ATP = L-glutamyl 5-phosphate + ADP. Its pathway is amino-acid biosynthesis; L-proline biosynthesis; L-glutamate 5-semialdehyde from L-glutamate: step 1/2. Catalyzes the transfer of a phosphate group to glutamate to form L-glutamate 5-phosphate. This chain is Glutamate 5-kinase, found in Mycobacterium avium (strain 104).